The following is a 287-amino-acid chain: O-ureido-serine racemase (287 aa).

N20 is a substrate binding site. The Proton donor role is filled by C81. Residues G82–N83, N167, N200, and E218–Y219 each bind substrate. Catalysis depends on C227, which acts as the Proton acceptor. G228 to S229 lines the substrate pocket.

It belongs to the diaminopimelate epimerase family. In terms of assembly, monomer.

Its subcellular location is the cytoplasm. The catalysed reaction is O-ureido-L-serine = O-ureido-D-serine. Its activity is regulated as follows. Inhibited by thiol-inactivating reagents such as iodoacetamide and Hg(2+) ions. Functionally, involved in the biosynthesis of the antibiotic D-cycloserine (DCS), a cyclic structural analog of D-alanine, used as an antitubercular agent. Catalyzes the stereoinversion of O-ureido-L-serine to O-ureido-D-serine. In Streptomyces lavendulae, this protein is O-ureido-serine racemase.